The chain runs to 174 residues: Interferon gamma (174 aa).

An N-terminal signal peptide occupies residues 1-23 (MHTTRCILALLLCLTQAMSGCYC). Residue glutamine 24 is modified to Pyrrolidone carboxylic acid. 2 N-linked (GlcNAc...) asparagine glycosylation sites follow: asparagine 39 and asparagine 106.

This sequence belongs to the type II (or gamma) interferon family. As to quaternary structure, homodimer. Interacts with IFNGR1 (via extracellular domain); this interaction promotes IFNGR1 dimerization. As to expression, released primarily from activated T lymphocytes.

It localises to the secreted. Its function is as follows. Type II interferon produced by immune cells such as T-cells and NK cells that plays crucial roles in antimicrobial, antiviral, and antitumor responses by activating effector immune cells and enhancing antigen presentation. Primarily signals through the JAK-STAT pathway after interaction with its receptor IFNGR1 to affect gene regulation. Upon IFNG binding, IFNGR1 intracellular domain opens out to allow association of downstream signaling components JAK2, JAK1 and STAT1, leading to STAT1 activation, nuclear translocation and transcription of IFNG-regulated genes. Many of the induced genes are transcription factors such as IRF1 that are able to further drive regulation of a next wave of transcription. Plays a role in class I antigen presentation pathway by inducing a replacement of catalytic proteasome subunits with immunoproteasome subunits. In turn, increases the quantity, quality, and repertoire of peptides for class I MHC loading. Increases the efficiency of peptide generation also by inducing the expression of activator PA28 that associates with the proteasome and alters its proteolytic cleavage preference. Up-regulates as well MHC II complexes on the cell surface by promoting expression of several key molecules such as cathepsins B/CTSB, H/CTSH, and L/CTSL. Participates in the regulation of hematopoietic stem cells during development and under homeostatic conditions by affecting their development, quiescence, and differentiation. The chain is Interferon gamma (IFNG) from Mesocricetus auratus (Golden hamster).